The following is a 376-amino-acid chain: Serine-arginine protein 55 (376 aa).

The region spanning 4-74 is the RRM 1 domain; that stretch reads SRVYVGGLPY…ERVVVEPARG (71 aa). The disordered stretch occupies residues 73–114; the sequence is RGTARGSNRDRYDDRYGGRRGGGGGRYNEKNKNSRSSSRYGP. Basic and acidic residues predominate over residues 79-89; the sequence is SNRDRYDDRYG. One can recognise an RRM 2 domain in the interval 120 to 193; sequence YRLIVENLSS…RRIHLVEDRR (74 aa). Serine 165 is subject to Phosphoserine. Residues 185–194 show a composition bias toward basic and acidic residues; the sequence is RIHLVEDRRG. Residues 185–376 form a disordered region; the sequence is RIHLVEDRRG…PDRNNESMDD (192 aa). The segment covering 196-205 has biased composition (gly residues); that stretch reads RSGGGGGSGR. Composition is skewed to basic residues over residues 215 to 263 and 271 to 283; these read SRSR…SRSN and SKSK…RSRS. Basic and acidic residues predominate over residues 284–304; it reads PKRERDSRSRSRSVSKRESRS.

This sequence belongs to the splicing factor SR family. Extensively phosphorylated on serine residues in the RS domain.

The protein localises to the nucleus. Essential for development. May have a critical role in splicing or in controlling alternative splice site use of at least some pre-mRNA in vivo. Not required for all splicing. May play a general role in the condensation or decondensation of chromatin. The sequence is that of Serine-arginine protein 55 (B52) from Drosophila melanogaster (Fruit fly).